Here is a 512-residue protein sequence, read N- to C-terminus: Histidine ammonia-lyase (512 aa).

The segment at residues 142–144 (ASG) is a cross-link (5-imidazolinone (Ala-Gly)). Residue Ser-143 is modified to 2,3-didehydroalanine (Ser).

Belongs to the PAL/histidase family. Post-translationally, contains an active site 4-methylidene-imidazol-5-one (MIO), which is formed autocatalytically by cyclization and dehydration of residues Ala-Ser-Gly.

Its subcellular location is the cytoplasm. The enzyme catalyses L-histidine = trans-urocanate + NH4(+). It participates in amino-acid degradation; L-histidine degradation into L-glutamate; N-formimidoyl-L-glutamate from L-histidine: step 1/3. The sequence is that of Histidine ammonia-lyase from Bartonella henselae (strain ATCC 49882 / DSM 28221 / CCUG 30454 / Houston 1) (Rochalimaea henselae).